Reading from the N-terminus, the 58-residue chain is Potassium channel toxin alpha-KTx 1.6 (58 aa).

The first 21 residues, 1 to 21 (MKISFLLLLAIVICSIGWTEA), serve as a signal peptide directing secretion. Residue Gln-22 is modified to Pyrrolidone carboxylic acid. 3 disulfide bridges follow: Cys-28/Cys-49, Cys-34/Cys-54, and Cys-38/Cys-56.

This sequence belongs to the short scorpion toxin superfamily. Potassium channel inhibitor family. Alpha-KTx 01 subfamily. In terms of tissue distribution, expressed by the venom gland.

Its subcellular location is the secreted. Functionally, potent blocker of both large-conductance calcium-activated potassium channels (KCa1.1/KCNMA1) and voltage-gated potassium channels (Kv1.3/KCNA3 and ERG1/Kv11.1/KCNH2). This Olivierus martensii (Manchurian scorpion) protein is Potassium channel toxin alpha-KTx 1.6.